Reading from the N-terminus, the 426-residue chain is Pannexin-1 (426 aa).

The Cytoplasmic segment spans residues 1-40 (MAIAHLATEYVFSDFLLKEPTEPKFKGLRLELAVDKMVTC). Cys-40 carries the post-translational modification S-nitrosocysteine. A helical membrane pass occupies residues 41–61 (IAVGLPLLLISLAFAQEISIG). Residues 62 to 106 (TQISCFSPSSFSWRQAAFVDSYCWAAVQQKNSLQSESGNLPLWLH) lie on the Extracellular side of the membrane. Intrachain disulfides connect Cys-66–Cys-264 and Cys-84–Cys-245. A helical membrane pass occupies residues 107–127 (KFFPYILLLFAILLYLPALFW). Residues 128-216 (RFAAAPHLCS…HLIMKYISCR (89 aa)) lie on the Cytoplasmic side of the membrane. Tyr-198 carries the post-translational modification Phosphotyrosine. A helical transmembrane segment spans residues 217–237 (LVTFAVVLLACIYLSYYFSLS). The Extracellular segment spans residues 238–277 (SLSDEFLCSIKSGVLRNDSTIPDSFQCKLIAVGIFQLLSL). An N-linked (GlcNAc...) asparagine glycan is attached at Asn-254. A helical membrane pass occupies residues 278–298 (INLLVYALLVPVVIYTLFVPF). The Cytoplasmic segment spans residues 299–426 (RQKTDVLKVY…SRQRLLNSSC (128 aa)). Cys-346 bears the S-nitrosocysteine mark. Residues 407–426 (ETAANNGEKNSRQRLLNSSC) are disordered.

It belongs to the pannexin family. As to quaternary structure, homoheptameric. S-nitrosylation inhibits channel currents and ATP release. In terms of processing, N-glycosylation plays a role in cell surface targeting. Glycosylation at its extracellular surface makes unlikely that two oligomers could dock to form an intercellular channel such as in gap junctions. Exists in three glycosylation states: non-glycosylated (GLY0), high-mannose glycosylated (GLY1), and fully mature glycosylated (GLY2). Post-translationally, cleaved by CASP3 and CASP7 during apoptosis. Cleavage opens the channel for the release of metabolites and induces plasma membrane permeability during apoptosis. Phosphorylated at Tyr-198 by SRC. Phosphorylation activates ATP release. Constitutively phosphorylated in vascular smooth muscle cells. As to expression, expressed in the eye, thyroid, prostate, kidney and liver. Abundantly expressed in the CNS, including hippocampus, olfactory bulb, cortex, cerebellum and white matter.

The protein resides in the cell membrane. Its subcellular location is the endoplasmic reticulum membrane. The catalysed reaction is Ca(2+)(in) = Ca(2+)(out). It carries out the reaction ATP(in) = ATP(out). It catalyses the reaction K(+)(in) = K(+)(out). The enzyme catalyses chloride(in) = chloride(out). The catalysed reaction is iodide(out) = iodide(in). It carries out the reaction Na(+)(in) = Na(+)(out). It catalyses the reaction nitrate(in) = nitrate(out). The enzyme catalyses L-aspartate(out) = L-aspartate(in). The catalysed reaction is L-glutamate(out) = L-glutamate(in). It carries out the reaction D-gluconate(in) = D-gluconate(out). It catalyses the reaction spermidine(in) = spermidine(out). Functionally, ion channel involved in a variety of physiological functions such as blood pressure regulation, apoptotic cell clearance and oogenesis. Forms anion-selective channels with relatively low conductance and an order of permeabilities: nitrate&gt;iodide&gt;chlroride&gt;&gt;aspartate=glutamate=gluconate. Can release ATP upon activation through phosphorylation or cleavage at C-terminus. May play a role as a Ca(2+)-leak channel to regulate ER Ca(2+) homeostasis. In terms of biological role, during apoptosis, the C terminal tail is cleaved by caspases, which opens the main pore acting as a large-pore ATP efflux channel with a broad distribution, which allows the regulated release of molecules and ions smaller than 1 kDa, such as nucleotides ATP and UTP, and selective plasma membrane permeability to attract phagocytes that engulf the dying cells. The sequence is that of Pannexin-1 (Panx1) from Rattus norvegicus (Rat).